Consider the following 237-residue polypeptide: Uridylate kinase (237 aa).

ATP is bound at residue 11–14 (KLSG). Glycine 53 lines the UMP pocket. Positions 54 and 58 each coordinate ATP. UMP-binding positions include aspartate 73 and 134–141 (TGNPFFTT). ATP-binding residues include threonine 161, tyrosine 167, and aspartate 170.

This sequence belongs to the UMP kinase family. Homohexamer.

It localises to the cytoplasm. It carries out the reaction UMP + ATP = UDP + ADP. The protein operates within pyrimidine metabolism; CTP biosynthesis via de novo pathway; UDP from UMP (UMPK route): step 1/1. Its activity is regulated as follows. Inhibited by UTP. Functionally, catalyzes the reversible phosphorylation of UMP to UDP. The polypeptide is Uridylate kinase (Burkholderia ambifaria (strain ATCC BAA-244 / DSM 16087 / CCUG 44356 / LMG 19182 / AMMD) (Burkholderia cepacia (strain AMMD))).